We begin with the raw amino-acid sequence, 331 residues long: Holliday junction branch migration complex subunit RuvB (331 aa).

The large ATPase domain (RuvB-L) stretch occupies residues 1–186 (MAKTMMQDRL…FGIVQRLEFY (186 aa)). ATP is bound by residues Ile-25, Arg-26, Gly-67, Lys-70, Thr-71, Thr-72, 133–135 (EDF), Arg-176, Tyr-186, and Arg-223. Thr-71 lines the Mg(2+) pocket. Positions 187–257 (NIADLTTIVS…IAGSALDMLA (71 aa)) are small ATPAse domain (RuvB-S). Residues 260-331 (RRGLDHLDRR…LTQMAIDQMV (72 aa)) are head domain (RuvB-H). Positions 296, 315, and 320 each coordinate DNA.

The protein belongs to the RuvB family. As to quaternary structure, homohexamer. Forms an RuvA(8)-RuvB(12)-Holliday junction (HJ) complex. HJ DNA is sandwiched between 2 RuvA tetramers; dsDNA enters through RuvA and exits via RuvB. An RuvB hexamer assembles on each DNA strand where it exits the tetramer. Each RuvB hexamer is contacted by two RuvA subunits (via domain III) on 2 adjacent RuvB subunits; this complex drives branch migration. In the full resolvosome a probable DNA-RuvA(4)-RuvB(12)-RuvC(2) complex forms which resolves the HJ.

It localises to the cytoplasm. The catalysed reaction is ATP + H2O = ADP + phosphate + H(+). The RuvA-RuvB-RuvC complex processes Holliday junction (HJ) DNA during genetic recombination and DNA repair, while the RuvA-RuvB complex plays an important role in the rescue of blocked DNA replication forks via replication fork reversal (RFR). RuvA specifically binds to HJ cruciform DNA, conferring on it an open structure. The RuvB hexamer acts as an ATP-dependent pump, pulling dsDNA into and through the RuvAB complex. RuvB forms 2 homohexamers on either side of HJ DNA bound by 1 or 2 RuvA tetramers; 4 subunits per hexamer contact DNA at a time. Coordinated motions by a converter formed by DNA-disengaged RuvB subunits stimulates ATP hydrolysis and nucleotide exchange. Immobilization of the converter enables RuvB to convert the ATP-contained energy into a lever motion, pulling 2 nucleotides of DNA out of the RuvA tetramer per ATP hydrolyzed, thus driving DNA branch migration. The RuvB motors rotate together with the DNA substrate, which together with the progressing nucleotide cycle form the mechanistic basis for DNA recombination by continuous HJ branch migration. Branch migration allows RuvC to scan DNA until it finds its consensus sequence, where it cleaves and resolves cruciform DNA. The polypeptide is Holliday junction branch migration complex subunit RuvB (Psychrobacter arcticus (strain DSM 17307 / VKM B-2377 / 273-4)).